The sequence spans 303 residues: Nucleotide-binding protein SAB0719 (303 aa).

ATP is bound at residue 18–25 (GLSGAGKS). 69–72 (DLRG) contributes to the GTP binding site.

It belongs to the RapZ-like family.

Its function is as follows. Displays ATPase and GTPase activities. This is Nucleotide-binding protein SAB0719 from Staphylococcus aureus (strain bovine RF122 / ET3-1).